The following is a 259-amino-acid chain: Ferritin-2, chloroplastic (259 aa).

A chloroplast-targeting transit peptide spans 1-52 (MLLKLAPAFTLLNSHGENLSPMLSTSSQGFVLKNFSTKSRNGLLVVCASKGS). Residues 53–85 (NTKPLTGVVFEPFEEVKKELMLVPTVPQVSLAR) are extension peptide (EP). Residues 86-239 (HKYSDQCEAA…EYVAQLRRVG (154 aa)) enclose the Ferritin-like diiron domain. Residues E103, E138, H141, and Q221 each contribute to the Fe cation site.

Belongs to the ferritin family. Oligomer of 24 subunits. There are two types of subunits: L (light) chain and H (heavy) chain. The major chain can be light or heavy, depending on the species and tissue type. The functional molecule forms a roughly spherical shell with a diameter of 12 nm and contains a central cavity into which the insoluble mineral iron core is deposited.

Its subcellular location is the plastid. The protein localises to the chloroplast. It catalyses the reaction 4 Fe(2+) + O2 + 4 H(+) = 4 Fe(3+) + 2 H2O. In terms of biological role, stores iron in a soluble, non-toxic, readily available form. Important for iron homeostasis. Has ferroxidase activity. Iron is taken up in the ferrous form and deposited as ferric hydroxides after oxidation. This chain is Ferritin-2, chloroplastic (FER2), found in Nicotiana tabacum (Common tobacco).